Reading from the N-terminus, the 240-residue chain is Small ribosomal subunit protein uS3 (240 aa).

The 71-residue stretch at 39–109 folds into the KH type-2 domain; the sequence is IRQYIEKTLN…QIRVNVIEVP (71 aa). A disordered region spans residues 219 to 240; sequence APPSQPRRKSRRQQFDDRSQDG. The span at 231 to 240 shows a compositional bias: basic and acidic residues; sequence QQFDDRSQDG.

Belongs to the universal ribosomal protein uS3 family. In terms of assembly, part of the 30S ribosomal subunit. Forms a tight complex with proteins S10 and S14.

In terms of biological role, binds the lower part of the 30S subunit head. Binds mRNA in the 70S ribosome, positioning it for translation. The polypeptide is Small ribosomal subunit protein uS3 (Synechocystis sp. (strain ATCC 27184 / PCC 6803 / Kazusa)).